A 164-amino-acid polypeptide reads, in one-letter code: NADH-quinone oxidoreductase subunit I (164 aa).

4Fe-4S ferredoxin-type domains lie at 55–85 (LRRY…IDAE) and 95–124 (TRYD…EGPN). Residues cysteine 65, cysteine 68, cysteine 71, cysteine 75, cysteine 104, cysteine 107, cysteine 110, and cysteine 114 each contribute to the [4Fe-4S] cluster site.

The protein belongs to the complex I 23 kDa subunit family. As to quaternary structure, NDH-1 is composed of 14 different subunits. Subunits NuoA, H, J, K, L, M, N constitute the membrane sector of the complex. It depends on [4Fe-4S] cluster as a cofactor.

It is found in the cell inner membrane. It carries out the reaction a quinone + NADH + 5 H(+)(in) = a quinol + NAD(+) + 4 H(+)(out). Its function is as follows. NDH-1 shuttles electrons from NADH, via FMN and iron-sulfur (Fe-S) centers, to quinones in the respiratory chain. The immediate electron acceptor for the enzyme in this species is believed to be ubiquinone. Couples the redox reaction to proton translocation (for every two electrons transferred, four hydrogen ions are translocated across the cytoplasmic membrane), and thus conserves the redox energy in a proton gradient. This Jannaschia sp. (strain CCS1) protein is NADH-quinone oxidoreductase subunit I.